Here is a 391-residue protein sequence, read N- to C-terminus: Phosphopentomutase (391 aa).

Positions 12, 285, 290, 326, 327, and 338 each coordinate Mn(2+).

The protein belongs to the phosphopentomutase family. It depends on Mn(2+) as a cofactor.

It is found in the cytoplasm. It catalyses the reaction 2-deoxy-alpha-D-ribose 1-phosphate = 2-deoxy-D-ribose 5-phosphate. It carries out the reaction alpha-D-ribose 1-phosphate = D-ribose 5-phosphate. It participates in carbohydrate degradation; 2-deoxy-D-ribose 1-phosphate degradation; D-glyceraldehyde 3-phosphate and acetaldehyde from 2-deoxy-alpha-D-ribose 1-phosphate: step 1/2. Isomerase that catalyzes the conversion of deoxy-ribose 1-phosphate (dRib-1-P) and ribose 1-phosphate (Rib-1-P) to deoxy-ribose 5-phosphate (dRib-5-P) and ribose 5-phosphate (Rib-5-P), respectively. This Herpetosiphon aurantiacus (strain ATCC 23779 / DSM 785 / 114-95) protein is Phosphopentomutase.